The chain runs to 72 residues: Translation initiation factor IF-1 (72 aa).

In terms of domain architecture, S1-like spans 1 to 72 (MSKDDVIEMQ…TRGRITWRAK (72 aa)).

This sequence belongs to the IF-1 family. Component of the 30S ribosomal translation pre-initiation complex which assembles on the 30S ribosome in the order IF-2 and IF-3, IF-1 and N-formylmethionyl-tRNA(fMet); mRNA recruitment can occur at any time during PIC assembly.

Its subcellular location is the cytoplasm. Its function is as follows. One of the essential components for the initiation of protein synthesis. Stabilizes the binding of IF-2 and IF-3 on the 30S subunit to which N-formylmethionyl-tRNA(fMet) subsequently binds. Helps modulate mRNA selection, yielding the 30S pre-initiation complex (PIC). Upon addition of the 50S ribosomal subunit IF-1, IF-2 and IF-3 are released leaving the mature 70S translation initiation complex. The sequence is that of Translation initiation factor IF-1 from Clostridium beijerinckii (strain ATCC 51743 / NCIMB 8052) (Clostridium acetobutylicum).